A 301-amino-acid polypeptide reads, in one-letter code: UPF0282 protein Pcal_1546 (301 aa).

It belongs to the UPF0282 family.

This chain is UPF0282 protein Pcal_1546, found in Pyrobaculum calidifontis (strain DSM 21063 / JCM 11548 / VA1).